Consider the following 68-residue polypeptide: Protein SlyX homolog (68 aa).

Belongs to the SlyX family.

The chain is Protein SlyX homolog from Pseudomonas putida (strain ATCC 700007 / DSM 6899 / JCM 31910 / BCRC 17059 / LMG 24140 / F1).